The sequence spans 814 residues: Phosphatidylinositol 3-kinase VPS34 (814 aa).

The region spanning 25 to 177 (LDGNLPVKKS…EKLMNKYERG (153 aa)) is the C2 PI3K-type domain. A PIK helical domain is found at 274–449 (DRDLKPSNIE…YSTYELLEEN (176 aa)). Residues 532 to 799 (VAGESSLFKS…LINESVSALF (268 aa)) enclose the PI3K/PI4K catalytic domain. The interval 538-544 (LFKSALH) is G-loop. Residues 668–676 (GIGDRHLDN) are catalytic loop. The interval 687–708 (HVDFAFILGRDPKPFPPPMKLC) is activation loop.

This sequence belongs to the PI3/PI4-kinase family. In terms of assembly, interacts with VPS15. Component of a complex made of VPS38/USL1 and PI3K main subunits such as VPS15, ATG6/VPS30 and VPS34. Binds directly to VPS38/USL1.

It catalyses the reaction a 1,2-diacyl-sn-glycero-3-phospho-(1D-myo-inositol) + ATP = a 1,2-diacyl-sn-glycero-3-phospho-(1D-myo-inositol-3-phosphate) + ADP + H(+). With respect to regulation, the PI3K inhibitor LY294002 affects phosphatidylinositol 3-phosphate (PI3P) levels and triggers a decrease in proline, hydrophobic and aromatic amino acids, and sugars (e.g. raffinose) accumulation in response to salt treatment correlated with lower P5CS1 expression and higher ProDH1 expression, genes involved in proline biosynthesis and catabolism, respectively. In terms of biological role, involved in the negative regulation of proline, hydrophobic and aromatic amino acids accumulation, especially in response to salt (NaCl), either through inhibition of their synthesis and/or promotion of their catabolism. Triggers defense responses (e.g. pathogenesis related (PR1 and PR5) gene expression and hydrogen peroxide H(2)O(2) burst) to the bacterial pathogen compatible Pseudomonas syringae pv tomato DC3000 (Pst DC3000) and incompatible Pst DC3000 (avrRpt2), by regulating reactive ogygen species (ROS) production and by promoting stomatal closure. In Arabidopsis thaliana (Mouse-ear cress), this protein is Phosphatidylinositol 3-kinase VPS34.